The following is a 558-amino-acid chain: MSTVNLSNFIDMLRLGCKNIANNFEYINQLNVFPVPDGDTGTNMKVTLSEAFKKLESEISHIKSFSDLGKSFTRDLLLFSRGNSGVIFSQIMKGFFSDMISTKTATETELGIEDFATAFIKAEEVAYKNVSKPVEGTMLTVIRLISTDFKNQKNRAKTVQKLFEQVIKTAWQTVKKTPQMLPVLKASGVVDSGAYGFACFLEGMLSFYGEKATLNDGKLTSAELSQMTISGEKHVTEEEFGYCTEYVLKLGMSVSQEVEKQKFNQKKFESKVSKIATSVVVASDKDNGFVKVHAHTEKPNLLLELGLNYGEFELVKIENMNLQVAKQKPAPVKRNIKPAIVVTVPTEAFADRIREDYDIQAILCTDDTGAPSVFSLLEAVKLTHSSNIIFLLHDKNYFLSANEALKQLKHQKISADCVMTTNPIESLAALTVFNSDLNIHTNVKTMRRFVKGFASATITQASKKYKENRIEVNKGDFIAVANNSICVSEKELVQCVFNTIDHLLKKVKKPEFLLAYYGKDITAEEAEAMKEKIEKKYKLFCEFSPGEQKVFSYILGIQ.

The region spanning 7–206 (SNFIDMLRLG…FACFLEGMLS (200 aa)) is the DhaL domain.

This is an uncharacterized protein from Mycoplasma pneumoniae (strain ATCC 29342 / M129 / Subtype 1) (Mycoplasmoides pneumoniae).